Consider the following 419-residue polypeptide: 3-isopropylmalate dehydratase large subunit (419 aa).

The [4Fe-4S] cluster site is built by Cys300, Cys360, and Cys363.

The protein belongs to the aconitase/IPM isomerase family. LeuC type 2 subfamily. In terms of assembly, heterodimer of LeuC and LeuD. Requires [4Fe-4S] cluster as cofactor.

It carries out the reaction (2R,3S)-3-isopropylmalate = (2S)-2-isopropylmalate. Its pathway is amino-acid biosynthesis; L-leucine biosynthesis; L-leucine from 3-methyl-2-oxobutanoate: step 2/4. Functionally, catalyzes the isomerization between 2-isopropylmalate and 3-isopropylmalate, via the formation of 2-isopropylmaleate. The polypeptide is 3-isopropylmalate dehydratase large subunit (Nitratidesulfovibrio vulgaris (strain ATCC 29579 / DSM 644 / CCUG 34227 / NCIMB 8303 / VKM B-1760 / Hildenborough) (Desulfovibrio vulgaris)).